Here is a 20-residue protein sequence, read N- to C-terminus: Fibrinogen beta chain (20 aa).

Residues isoleucine 1–arginine 12 are compositionally biased toward acidic residues. The interval isoleucine 1–arginine 20 is disordered.

In terms of assembly, heterohexamer; disulfide linked. Contains 2 sets of 3 non-identical chains (alpha, beta and gamma). The 2 heterotrimers are in head to head conformation with the N-termini in a small central domain. Post-translationally, conversion of fibrinogen to fibrin is triggered by thrombin, which cleaves fibrinopeptides A and B from alpha and beta chains, and thus exposes the N-terminal polymerization sites responsible for the formation of the soft clot.

It is found in the secreted. Its function is as follows. Cleaved by the protease thrombin to yield monomers which, together with fibrinogen alpha (FGA) and fibrinogen gamma (FGG), polymerize to form an insoluble fibrin matrix. Fibrin has a major function in hemostasis as one of the primary components of blood clots. In addition, functions during the early stages of wound repair to stabilize the lesion and guide cell migration during re-epithelialization. Was originally thought to be essential for platelet aggregation, based on in vitro studies using anticoagulated blood. However subsequent studies have shown that it is not absolutely required for thrombus formation in vivo. Enhances expression of SELP in activated platelets. Maternal fibrinogen is essential for successful pregnancy. Fibrin deposition is also associated with infection, where it protects against IFNG-mediated hemorrhage. May also facilitate the antibacterial immune response via both innate and T-cell mediated pathways. The protein is Fibrinogen beta chain (FGB) of Felis catus (Cat).